The chain runs to 328 residues: MDKKVSFTSSVAHSTPPYLSTSISWGLPTKSNGVTESLSLKVVDARPERLINTKNISFQDQDSSSTLSSAQSSNDVTSSGDDNPSRQISFLAHSDVCKGFEETQRKRFAIKSGSSTAGIADIHSSPSKANFSFHYADPHFGGLMPAAYLPQATIWNPQMTRVPLPFDLIENEPVFVNAKQFHAIMRRRQQRAKLEAQNKLIKARKPYLHESRHVHALKRPRGSGGRFLNTKKLQESTDPKQDMPIQQQHATGNMSRFVLYQLQNSNDCDCSTTSRSDITSASDSVNLFGHSEFLISDCPSQTNPTMYVHGQSNDMHGGRNTHHFSVHI.

Positions K54–R86 are disordered. Residues S57–D75 are compositionally biased toward low complexity. Positions V76–R86 are enriched in polar residues. Positions F175 to N198 match the Subunit association domain (SAD) motif. A DNA-binding region (NFYA/HAP2-type) is located at residues K205–T230.

This sequence belongs to the NFYA/HAP2 subunit family. In terms of assembly, heterotrimeric transcription factor composed of three components, NF-YA, NF-YB and NF-YC. NF-YB and NF-YC must interact and dimerize for NF-YA association and DNA binding. In terms of tissue distribution, expressed in the whole plant, except roots.

The protein localises to the nucleus. Functionally, stimulates the transcription of various genes by recognizing and binding to a CCAAT motif in promoters. The sequence is that of Nuclear transcription factor Y subunit A-8 (NFYA8) from Arabidopsis thaliana (Mouse-ear cress).